We begin with the raw amino-acid sequence, 397 residues long: 2,3-bisphosphoglycerate-independent phosphoglycerate mutase (397 aa).

Belongs to the BPG-independent phosphoglycerate mutase family. A-PGAM subfamily.

It catalyses the reaction (2R)-2-phosphoglycerate = (2R)-3-phosphoglycerate. Its pathway is carbohydrate degradation; glycolysis; pyruvate from D-glyceraldehyde 3-phosphate: step 3/5. Its function is as follows. Catalyzes the interconversion of 2-phosphoglycerate and 3-phosphoglycerate. In Methanosarcina mazei (strain ATCC BAA-159 / DSM 3647 / Goe1 / Go1 / JCM 11833 / OCM 88) (Methanosarcina frisia), this protein is 2,3-bisphosphoglycerate-independent phosphoglycerate mutase (apgM).